A 277-amino-acid chain; its full sequence is Release factor glutamine methyltransferase (277 aa).

Residues 117 to 121, Asp-140, Trp-168, and Asn-182 each bind S-adenosyl-L-methionine; that span reads GTGCG. 182 to 185 lines the substrate pocket; that stretch reads NPPY.

This sequence belongs to the protein N5-glutamine methyltransferase family. PrmC subfamily.

It catalyses the reaction L-glutaminyl-[peptide chain release factor] + S-adenosyl-L-methionine = N(5)-methyl-L-glutaminyl-[peptide chain release factor] + S-adenosyl-L-homocysteine + H(+). In terms of biological role, methylates the class 1 translation termination release factors RF1/PrfA and RF2/PrfB on the glutamine residue of the universally conserved GGQ motif. This Buchnera aphidicola subsp. Acyrthosiphon pisum (strain APS) (Acyrthosiphon pisum symbiotic bacterium) protein is Release factor glutamine methyltransferase.